A 272-amino-acid polypeptide reads, in one-letter code: Alcohol dehydrogenase-related 31 kDa protein (272 aa).

NAD(+) is bound at residue 11–34 (YVADCGGIALETSKVLMTKNIAKL). Ser139 provides a ligand contact to substrate. The active-site Proton acceptor is Tyr152.

Belongs to the short-chain dehydrogenases/reductases (SDR) family.

The polypeptide is Alcohol dehydrogenase-related 31 kDa protein (Adhr) (Drosophila melanogaster (Fruit fly)).